A 31-amino-acid chain; its full sequence is Cytochrome b6-f complex subunit 6 (31 aa).

The helical transmembrane segment at 3 to 23 threads the bilayer; it reads LFIGYIIFLVAFFGLATGLFL.

Belongs to the PetL family. In terms of assembly, the 4 large subunits of the cytochrome b6-f complex are cytochrome b6, subunit IV (17 kDa polypeptide, PetD), cytochrome f and the Rieske protein, while the 4 small subunits are PetG, PetL, PetM and PetN. The complex functions as a dimer.

The protein resides in the plastid. Its subcellular location is the chloroplast thylakoid membrane. In terms of biological role, component of the cytochrome b6-f complex, which mediates electron transfer between photosystem II (PSII) and photosystem I (PSI), cyclic electron flow around PSI, and state transitions. PetL is important for photoautotrophic growth as well as for electron transfer efficiency and stability of the cytochrome b6-f complex. This chain is Cytochrome b6-f complex subunit 6, found in Porphyra purpurea (Red seaweed).